Here is a 183-residue protein sequence, read N- to C-terminus: Endoribonuclease AbiQ (183 aa).

It belongs to the ToxN/AbiQ toxin family. In terms of assembly, forms a triangular heterohexamer with a single 35-nt-long repeat of RNA antitoxin AntiQ.

The protein localises to the cytoplasm. Toxic component of a type III toxin-antitoxin (TA) system. An endoribonuclease that is probably sequence-specific. It is neutralized by its cognate antitoxin RNA AntiQ, which has 2.8 35 nucleotide-long repeats. Cannot be cloned in L.lactis subsp. cremoris strain NZ9000 in the absence of the antitoxin gene; expression in strain NZ9000 even in the presence of antiQ inhibits growth in a bacteriostatic fashion. Confers resistance to 936 and c2 phages but not P335 phages in L.lactis, causes an abortive infection (Abi phenotype). Viral DNA is replicated but not cleaved from its concatemeric form, while the viral major structural protein is produced normally in the presence of this protein. Operon expression in E.coli confers resistance to 3 phages of the Myoviridae family (T4, RB69 and phage 2) and 1 of the Siphoviridae family (T5), but not other tested phages (T1, T3, lambda vir, HK97, Mu and pilH alpha). The presence of this operon in L.lactis subsp. lactis strain IL1403 during phage P008 infection alters the viral transcription profiles. In Lactococcus lactis subsp. lactis (Streptococcus lactis), this protein is Endoribonuclease AbiQ.